Consider the following 366-residue polypeptide: 1-aminocyclopropane-1-carboxylate oxidase homolog 12 (366 aa).

One can recognise a Fe2OG dioxygenase domain in the interval 215–314 (KTLLMICHYY…RISVASFFSS (100 aa)). Fe cation is bound by residues His-239, Asp-241, and His-295. Arg-305 is a 2-oxoglutarate binding site.

It belongs to the iron/ascorbate-dependent oxidoreductase family. Fe(2+) is required as a cofactor.

The protein is 1-aminocyclopropane-1-carboxylate oxidase homolog 12 of Arabidopsis thaliana (Mouse-ear cress).